The sequence spans 307 residues: UDP-3-O-acyl-N-acetylglucosamine deacetylase (307 aa).

Zn(2+) is bound by residues H80, H239, and D243. The Proton donor role is filled by H266.

This sequence belongs to the LpxC family. Requires Zn(2+) as cofactor.

It carries out the reaction a UDP-3-O-[(3R)-3-hydroxyacyl]-N-acetyl-alpha-D-glucosamine + H2O = a UDP-3-O-[(3R)-3-hydroxyacyl]-alpha-D-glucosamine + acetate. It functions in the pathway glycolipid biosynthesis; lipid IV(A) biosynthesis; lipid IV(A) from (3R)-3-hydroxytetradecanoyl-[acyl-carrier-protein] and UDP-N-acetyl-alpha-D-glucosamine: step 2/6. In terms of biological role, catalyzes the hydrolysis of UDP-3-O-myristoyl-N-acetylglucosamine to form UDP-3-O-myristoylglucosamine and acetate, the committed step in lipid A biosynthesis. This is UDP-3-O-acyl-N-acetylglucosamine deacetylase from Neisseria meningitidis serogroup A / serotype 4A (strain DSM 15465 / Z2491).